We begin with the raw amino-acid sequence, 332 residues long: Probable ABC transporter permease protein YphD (332 aa).

A run of 10 helical transmembrane segments spans residues G28–I48, I63–V83, G84–L104, A105–L125, V131–M151, F172–I192, V222–A242, G251–L271, L278–L298, and F303–L323.

Belongs to the binding-protein-dependent transport system permease family. AraH/RbsC subfamily.

It localises to the cell inner membrane. Functionally, probably part of the binding-protein-dependent transport system YphDEF. Probably responsible for the translocation of the substrate across the membrane. The chain is Probable ABC transporter permease protein YphD (yphD) from Escherichia coli (strain K12).